Here is a 115-residue protein sequence, read N- to C-terminus: Large ribosomal subunit protein bL19 (115 aa).

It belongs to the bacterial ribosomal protein bL19 family.

In terms of biological role, this protein is located at the 30S-50S ribosomal subunit interface and may play a role in the structure and function of the aminoacyl-tRNA binding site. This Streptococcus pyogenes serotype M2 (strain MGAS10270) protein is Large ribosomal subunit protein bL19.